The chain runs to 955 residues: Eukaryotic translation initiation factor 3 subunit A (955 aa).

Positions 96-127 (LSLAEQRVTDAQAQADKIADEEEADDLEAEET) form a coiled coil. In terms of domain architecture, PCI spans 325–498 (YQRVASFVLL…RSVLFEEVRA (174 aa)). Coiled coils occupy residues 533–636 (AEAR…INAK) and 752–860 (KREA…KRAG). Residues 789–858 (RAEEEAKAAA…ELEAKLEAKR (70 aa)) show a composition bias toward basic and acidic residues. The interval 789–955 (RAEEEAKAAA…GRYIPPSQRN (167 aa)) is disordered.

This sequence belongs to the eIF-3 subunit A family. Component of the eukaryotic translation initiation factor 3 (eIF-3) complex.

The protein localises to the cytoplasm. Its function is as follows. RNA-binding component of the eukaryotic translation initiation factor 3 (eIF-3) complex, which is involved in protein synthesis of a specialized repertoire of mRNAs and, together with other initiation factors, stimulates binding of mRNA and methionyl-tRNAi to the 40S ribosome. The eIF-3 complex specifically targets and initiates translation of a subset of mRNAs involved in cell proliferation. In Yarrowia lipolytica (strain CLIB 122 / E 150) (Yeast), this protein is Eukaryotic translation initiation factor 3 subunit A.